The chain runs to 486 residues: Regulatory protein ViaA (486 aa).

The protein belongs to the ViaA family. As to quaternary structure, homodimer. Interacts with RavA.

The protein resides in the cytoplasm. In terms of biological role, component of the RavA-ViaA chaperone complex, which may act on the membrane to optimize the function of some of the respiratory chains. ViaA stimulates the ATPase activity of RavA. The sequence is that of Regulatory protein ViaA from Erwinia tasmaniensis (strain DSM 17950 / CFBP 7177 / CIP 109463 / NCPPB 4357 / Et1/99).